A 1412-amino-acid polypeptide reads, in one-letter code: Protein MODIFIER OF SNC1 1 (1412 aa).

6 disordered regions span residues 1–276 (MTSS…QSYP), 384–437 (GYGS…TQRP), 472–798 (QQMQ…KQKQ), 827–888 (NEGV…DESI), 909–1144 (DIKV…WNDG), and 1156–1412 (AEEM…GDRN). The segment covering 56–103 (SWGSKSSLNAWGTSSLSPRTESGPGSPSHLSNRPSSGGSVTRPSTADS) has biased composition (polar residues). Residue serine 72 is modified to Phosphoserine. The span at 109-119 (SSSSVAWDSNS) shows a compositional bias: low complexity. A compositionally biased stretch (polar residues) spans 120–135 (RPSSASGVFPSNQPSV). 2 stretches are compositionally biased toward basic and acidic residues: residues 197–207 (AEKDTSEKSTR) and 236–267 (ANDR…EGQL). Basic and acidic residues predominate over residues 478 to 488 (RNERREIRNDA). Polar residues-rich tracts occupy residues 517-531 (KTRT…SSVV), 539-553 (QPRT…NKVS), 565-581 (SKNS…TNKN), and 610-639 (RIVN…TNTE). A compositionally biased stretch (basic and acidic residues) spans 665–713 (DPKDNQRSTMRELARQRAQQRQKEEEERARDQRAKALAKLEELNRRSQI). Positions 667–717 (KDNQRSTMRELARQRAQQRQKEEEERARDQRAKALAKLEELNRRSQIYEEG) form a coiled coil. Composition is skewed to polar residues over residues 738–749 (GSHSSNATNSVE), 756–779 (KNTT…QQDN), and 829–847 (GVSS…SAES). Positions 850–862 (PKRKNNRNGKKKH) are enriched in basic residues. Basic and acidic residues predominate over residues 877-888 (VGKETKSGDESI). A Phosphoserine modification is found at serine 883. 2 stretches are compositionally biased toward polar residues: residues 914–938 (GDSS…NWKS) and 983–1003 (QTTV…QTSS). Residues 1006–1023 (KRVEIERYVPKPIVKEMA) show a composition bias toward basic and acidic residues. Positions 1056–1070 (LQPSGSTAGKSGSPS) are enriched in polar residues. Residues 1071-1084 (KSRHGNGRQGKHGR) are compositionally biased toward basic residues. The segment covering 1106 to 1137 (FVTSNQPIRGTVNYHSSKQTEQIAAKDQTTCN) has biased composition (polar residues). Basic and acidic residues-rich tracts occupy residues 1191 to 1202 (DPKKGNKRDFNK), 1222 to 1232 (KEGRVPGDHVW), and 1242 to 1251 (GGRESTRDKP). 2 stretches are compositionally biased toward polar residues: residues 1266–1286 (GFTT…QNRS) and 1293–1307 (VEQN…NTGQ). 2 stretches are compositionally biased toward basic and acidic residues: residues 1338–1351 (SNRD…HYEY) and 1359–1369 (YDGERSREQSK). Positions 1384–1397 (QGQQRQGGYQQQRG) are enriched in low complexity. Residues 1400 to 1412 (GRNGGHGFTGDRN) are compositionally biased toward gly residues.

As to quaternary structure, interacts with TCP14 and TCP15.

Its function is as follows. Involved in the regulation of the chromatin structure and DNA methylation at the SNC1 locus. Regulates the expression of SNC1 at chromatin level. This is Protein MODIFIER OF SNC1 1 (MOS1) from Arabidopsis thaliana (Mouse-ear cress).